A 192-amino-acid chain; its full sequence is Immunoglobulin superfamily member 23 (192 aa).

Residues M1–P26 form a disordered region. Residues S7–S18 show a composition bias toward pro residues. The region spanning P20 to S128 is the Ig-like domain. N-linked (GlcNAc...) asparagine glycosylation is present at N64. The chain crosses the membrane as a helical span at residues L158–I178.

As to expression, expressed in bone and small intestine. Highly expressed in osteoclasts, and low expressed in osteoblasts and peripheral blood mononuclear cells (PBMCs).

It localises to the cell membrane. May be involved in osteoclast differentiation. The polypeptide is Immunoglobulin superfamily member 23 (Homo sapiens (Human)).